A 327-amino-acid chain; its full sequence is Ankyrin repeat domain-containing protein SOWAHD (327 aa).

The disordered stretch occupies residues 1-31 (MAQALEDGNPLPKASNRPAESEAPSDPQIKD). ANK repeat units lie at residues 112 to 141 (CLEP…AEPS), 147 to 162 (DPIT…AKHG), and 186 to 216 (PGSG…LGAD). The tract at residues 251 to 311 (ERDRKRENAN…EKKASSTQEG (61 aa)) is disordered. A compositionally biased stretch (low complexity) spans 260–275 (NNNSSRTTTTTTTTSR). The segment covering 292-305 (HYKEASQPVKEKKA) has biased composition (basic and acidic residues).

Belongs to the SOWAH family.

This is Ankyrin repeat domain-containing protein SOWAHD (Sowahd) from Mus musculus (Mouse).